The chain runs to 186 residues: Elongation factor P (186 aa).

It belongs to the elongation factor P family.

Its subcellular location is the cytoplasm. Its pathway is protein biosynthesis; polypeptide chain elongation. Functionally, involved in peptide bond synthesis. Stimulates efficient translation and peptide-bond synthesis on native or reconstituted 70S ribosomes in vitro. Probably functions indirectly by altering the affinity of the ribosome for aminoacyl-tRNA, thus increasing their reactivity as acceptors for peptidyl transferase. The polypeptide is Elongation factor P (Enterococcus faecalis (strain ATCC 700802 / V583)).